The chain runs to 202 residues: Probable chemoreceptor glutamine deamidase CheD 2 (202 aa).

The protein belongs to the CheD family.

It carries out the reaction L-glutaminyl-[protein] + H2O = L-glutamyl-[protein] + NH4(+). In terms of biological role, probably deamidates glutamine residues to glutamate on methyl-accepting chemotaxis receptors (MCPs), playing an important role in chemotaxis. The protein is Probable chemoreceptor glutamine deamidase CheD 2 of Shewanella oneidensis (strain ATCC 700550 / JCM 31522 / CIP 106686 / LMG 19005 / NCIMB 14063 / MR-1).